The primary structure comprises 81 residues: Large ribosomal subunit protein bL28 (81 aa).

The protein belongs to the bacterial ribosomal protein bL28 family. As to quaternary structure, part of the 50S ribosomal subunit.

This Deinococcus radiodurans (strain ATCC 13939 / DSM 20539 / JCM 16871 / CCUG 27074 / LMG 4051 / NBRC 15346 / NCIMB 9279 / VKM B-1422 / R1) protein is Large ribosomal subunit protein bL28.